The chain runs to 350 residues: tRNA uridine(34) hydroxylase (350 aa).

The Rhodanese domain occupies Asp146 to Leu240. The active-site Cysteine persulfide intermediate is Cys200.

It belongs to the TrhO family.

It catalyses the reaction uridine(34) in tRNA + AH2 + O2 = 5-hydroxyuridine(34) in tRNA + A + H2O. Functionally, catalyzes oxygen-dependent 5-hydroxyuridine (ho5U) modification at position 34 in tRNAs. The chain is tRNA uridine(34) hydroxylase from Shigella dysenteriae serotype 1 (strain Sd197).